A 254-amino-acid chain; its full sequence is DNA repair protein RecO (254 aa).

This sequence belongs to the RecO family.

Functionally, involved in DNA repair and RecF pathway recombination. In Rhodopseudomonas palustris (strain BisB18), this protein is DNA repair protein RecO.